The primary structure comprises 362 residues: Outer membrane porin protein OmpD (362 aa).

Positions 1–21 (MKLKLVAVAVTSLLAAGVVNA) are cleaved as a signal peptide.

Belongs to the Gram-negative porin family. In terms of assembly, homotrimer.

Its subcellular location is the cell outer membrane. Its function is as follows. Forms pores that allow passive diffusion of small molecules across the outer membrane. This is Outer membrane porin protein OmpD (ompD) from Salmonella choleraesuis (strain SC-B67).